The primary structure comprises 105 residues: UPF0235 protein RP839 (105 aa).

The protein belongs to the UPF0235 family.

The chain is UPF0235 protein RP839 from Rickettsia prowazekii (strain Madrid E).